The sequence spans 125 residues: UPF0593 mitochondrial protein C806.05 (125 aa).

This sequence belongs to the UPF0593 family.

Its subcellular location is the mitochondrion. This is UPF0593 mitochondrial protein C806.05 from Schizosaccharomyces pombe (strain 972 / ATCC 24843) (Fission yeast).